The primary structure comprises 500 residues: NAD(P)H-quinone oxidoreductase chain 4, chloroplastic (500 aa).

A run of 14 helical transmembrane segments spans residues 4 to 24, 35 to 55, 87 to 107, 113 to 130, 134 to 154, 167 to 187, 208 to 228, 242 to 262, 274 to 294, 305 to 325, 330 to 350, 386 to 406, 416 to 436, and 463 to 483; these read FPWLTLIVVFPIFAGCFIFFL, YTMGICLLELLIMTYVFCYHF, IGPILLTGFITTLATLAAWPV, LFHFLMLAMYSGQIGLFS, LLLFFMMWELELIPVYLLLSM, FILYTAGGSIFLLIGVLGMGL, GLEILLYFGFLIAFAVKLPII, HYSTCMLLAGILLKMGAYGLI, SIFSPWLVIVGTIQIIYAALT, IAYSSVSHMGFIIIGIGSLTN, GAILQLLSHGFIGAALFFLGG, LALPGMSGFVAELMVFLGIIT, IIITLVMAIGIILTPIYLLSM, and FVSICIFLPVIAIGIYPDLVI.

The protein belongs to the complex I subunit 4 family.

The protein localises to the plastid. It localises to the chloroplast thylakoid membrane. It carries out the reaction a plastoquinone + NADH + (n+1) H(+)(in) = a plastoquinol + NAD(+) + n H(+)(out). The enzyme catalyses a plastoquinone + NADPH + (n+1) H(+)(in) = a plastoquinol + NADP(+) + n H(+)(out). This chain is NAD(P)H-quinone oxidoreductase chain 4, chloroplastic, found in Lemna minor (Common duckweed).